Consider the following 285-residue polypeptide: Sulfotransferase 2A2 (285 aa).

Residues lysine 44, serine 45, glycine 46, threonine 47, asparagine 48, and tryptophan 49 each contribute to the 3'-phosphoadenylyl sulfate site. Histidine 99 (proton acceptor) is an active-site residue. 3'-phosphoadenylyl sulfate-binding residues include arginine 121, serine 129, tyrosine 184, serine 218, methionine 223, arginine 247, lysine 248, and glycine 249.

It belongs to the sulfotransferase 1 family.

The protein resides in the cytoplasm. The catalysed reaction is an alcohol + 3'-phosphoadenylyl sulfate = an alkyl sulfate + adenosine 3',5'-bisphosphate + H(+). Functionally, sulfotransferase that utilizes 3'-phospho-5'-adenylyl sulfate (PAPS) as sulfonate donor to catalyze the sulfate conjugation of a potential wide variety of acceptor molecules bearing a hydroxyl group. Sulfonation increases the water solubility of most compounds, and therefore their renal excretion, but it can also result in bioactivation to form active metabolites. This Mus musculus (Mouse) protein is Sulfotransferase 2A2.